Reading from the N-terminus, the 208-residue chain is Claudin-like protein ZF-A89 (208 aa).

4 consecutive transmembrane segments (helical) span residues 8-28, 82-102, 117-137, and 160-180; these read LLAT…CALP, ALVV…IAGG, VVVA…IPVC, and LGAS…GGAL.

Belongs to the claudin family.

The protein resides in the cell membrane. It is found in the cell junction. Its subcellular location is the tight junction. In terms of biological role, component of tight junction (TJ) strands. This is Claudin-like protein ZF-A89 (cldnd) from Danio rerio (Zebrafish).